A 278-amino-acid polypeptide reads, in one-letter code: Checkpoint protein HUS1B (278 aa).

Belongs to the HUS1 family. In terms of assembly, interacts with RAD1 and RAD9B. As to expression, expressed strongly in testis, less in spleen, thymus, prostate, colon and leukocytes.

This is Checkpoint protein HUS1B (HUS1B) from Homo sapiens (Human).